The sequence spans 177 residues: MSRVGKLPITIPEGVKIGLNDLEVKISGPKGELSKTFKGNIAISLAENKLLVKPLAAKKNARAMWGTARSIISNMVTGVKEGFKLKLEINGVGYRAMVKGKYLNLMLAKSHNTKIEIPSDIKIEMPKQNIIILEGTDKEKLGQFASIIIKQRPPEPYKGKGIKFENQFIPRKEGKKN.

This sequence belongs to the universal ribosomal protein uL6 family. In terms of assembly, part of the 50S ribosomal subunit.

This protein binds to the 23S rRNA, and is important in its secondary structure. It is located near the subunit interface in the base of the L7/L12 stalk, and near the tRNA binding site of the peptidyltransferase center. The sequence is that of Large ribosomal subunit protein uL6 from Rickettsia rickettsii (strain Iowa).